The following is a 196-amino-acid chain: Beta-crystallin A2 (196 aa).

Positions 1–11 (MTSEAMDTLGQ) are N-terminal arm. 2 Beta/gamma crystallin 'Greek key' domains span residues 12-51 (YKITVWEEESFQGKRCEFLMECPSIMERGFRKIRSIKVES) and 52-98 (GPWV…RPVK). Residues 99-104 (CANHND) form a connecting peptide region. Beta/gamma crystallin 'Greek key' domains follow at residues 105–146 (SKAI…KVNA) and 147–195 (GAWV…RRIQ).

Belongs to the beta/gamma-crystallin family. As to quaternary structure, homo/heterodimer, or complexes of higher-order. The structure of beta-crystallin oligomers seems to be stabilized through interactions between the N-terminal arms.

Functionally, crystallins are the dominant structural components of the vertebrate eye lens. The chain is Beta-crystallin A2 (CRYBA2) from Gallus gallus (Chicken).